Here is a 411-residue protein sequence, read N- to C-terminus: Serine/threonine transporter SstT (411 aa).

Helical transmembrane passes span 14–34 (GSLV…ASVA), 43–63 (FLGG…VFIL), 82–102 (IIML…VMSF), 141–161 (ALMS…GFAL), 192–212 (IGIF…ALAG), 218–238 (AVLL…IVFF), 290–310 (IPLG…VLTL), 330–350 (VVAA…LLLI), and 357–377 (FGIP…IGVI).

It belongs to the dicarboxylate/amino acid:cation symporter (DAACS) (TC 2.A.23) family.

It is found in the cell inner membrane. It carries out the reaction L-serine(in) + Na(+)(in) = L-serine(out) + Na(+)(out). The enzyme catalyses L-threonine(in) + Na(+)(in) = L-threonine(out) + Na(+)(out). Involved in the import of serine and threonine into the cell, with the concomitant import of sodium (symport system). This is Serine/threonine transporter SstT from Photobacterium profundum (strain SS9).